The sequence spans 141 residues: ATP synthase epsilon chain (141 aa).

Belongs to the ATPase epsilon chain family. As to quaternary structure, F-type ATPases have 2 components, CF(1) - the catalytic core - and CF(0) - the membrane proton channel. CF(1) has five subunits: alpha(3), beta(3), gamma(1), delta(1), epsilon(1). CF(0) has three main subunits: a, b and c.

It is found in the cell inner membrane. Its function is as follows. Produces ATP from ADP in the presence of a proton gradient across the membrane. The chain is ATP synthase epsilon chain from Gluconacetobacter diazotrophicus (strain ATCC 49037 / DSM 5601 / CCUG 37298 / CIP 103539 / LMG 7603 / PAl5).